The following is a 234-amino-acid chain: Sugar fermentation stimulation protein A (234 aa).

The H-T-H motif DNA-binding region spans 201-220 (LLSEAQQRGVEILAYKAEIS).

It belongs to the SfsA family.

In terms of biological role, binds to DNA non-specifically. Could be a regulatory factor involved in maltose metabolism. The sequence is that of Sugar fermentation stimulation protein A from Escherichia coli (strain 55989 / EAEC).